A 221-amino-acid chain; its full sequence is N-(5'-phosphoribosyl)anthranilate isomerase (221 aa).

This sequence belongs to the TrpF family.

It carries out the reaction N-(5-phospho-beta-D-ribosyl)anthranilate = 1-(2-carboxyphenylamino)-1-deoxy-D-ribulose 5-phosphate. It functions in the pathway amino-acid biosynthesis; L-tryptophan biosynthesis; L-tryptophan from chorismate: step 3/5. The polypeptide is N-(5'-phosphoribosyl)anthranilate isomerase (Chlorobaculum parvum (strain DSM 263 / NCIMB 8327) (Chlorobium vibrioforme subsp. thiosulfatophilum)).